Here is a 236-residue protein sequence, read N- to C-terminus: Large ribosomal subunit protein uL1 (236 aa).

Belongs to the universal ribosomal protein uL1 family. As to quaternary structure, part of the 50S ribosomal subunit.

Functionally, binds directly to 23S rRNA. The L1 stalk is quite mobile in the ribosome, and is involved in E site tRNA release. In terms of biological role, protein L1 is also a translational repressor protein, it controls the translation of the L11 operon by binding to its mRNA. The sequence is that of Large ribosomal subunit protein uL1 from Protochlamydia amoebophila (strain UWE25).